The sequence spans 395 residues: Mitogen-activated protein kinase 6 (395 aa).

The segment at 1-35 is disordered; sequence MDGGSGQPAADTEMTEAPGGFPAAAPSPQMPGIEN. The segment covering 17-27 has biased composition (low complexity); the sequence is APGGFPAAAPS. The Protein kinase domain maps to 63–348; that stretch reads KPPIMPIGKG…VLDALAHPYL (286 aa). Residues 69 to 77 and Lys92 each bind ATP; that span reads IGKGAYGIV. Catalysis depends on Asp189, which acts as the Proton acceptor. At Thr221 the chain carries Phosphothreonine. The TXY signature appears at 221–223; the sequence is TEY. Tyr223 carries the phosphotyrosine modification. The residue at position 226 (Thr226) is a Phosphothreonine.

This sequence belongs to the protein kinase superfamily. CMGC Ser/Thr protein kinase family. MAP kinase subfamily. Interacts with MEKK1, MKK1 and MKK2. May form a ternary complex with MEKK1 and MKK1 or MKK2. Interacts with NDPK2, AP2C1, MKP1 and PTP1. Interacts with DSPTP1B/MKP2, especially during HR-like responses triggered by fungal elicitors. Interacts with MKK4, MKK5 and MKK6. Binds to LIP5. Interacts with VQ4 and IKU1/VQ14. Interacts with RACK1A, RACK1B and RACK1C. Interacts with PTP1. Interacts with FLZ9. Binds to BASL and YDA. Post-translationally, dually phosphorylated on Thr-221 and Tyr-223, which activates the enzyme. Dephosphorylated by DSPTP1B/MKP2.

The protein localises to the cytoplasm. It is found in the nucleus. Its subcellular location is the cell cortex. The catalysed reaction is L-seryl-[protein] + ATP = O-phospho-L-seryl-[protein] + ADP + H(+). The enzyme catalyses L-threonyl-[protein] + ATP = O-phospho-L-threonyl-[protein] + ADP + H(+). Its activity is regulated as follows. Activated by threonine and tyrosine phosphorylation. Activated by the MAP kinase kinases MKK2, MKK3, MKK4, MKK5, MKK7 and MKK9. Activated in response to touch, wounding, low temperature, low humidity, salt stress, hydrogen peroxide, ozone, ACC (an ethylene precursor), jasmonic acid (JA), mastoparan and UVC. Activated in response to elicitors: oligogalacturonides, hexameric chitin fragments, fungal xylanase, and the bacterial flagellin and harpin. Activated upon Pseudomonas syringae pv. tomato DC3000 infection. Repressed by the protein phosphatase 2C AP2C1 and the protein-tyrosine-phosphatases MKP1 and PTP1. Repressed by DSPTP1B/MKP2-mediated dephosphorylation. Activated by polarized BASL. Triggered by MKKK20 in response to various abiotic stresses, including osmotic stress, cold and reactive oxygen species (ROS). Activated by MKK5 in response to abscisic acid (ABA). In terms of biological role, mitogen-activated protein kinase (MAPK) which regulates abscisic acid (ABA) responses in a MAPKKK20-MKK5-MPK6 cascade involved in root growth (e.g. root cell division and elongation) and stomatal response. Involved in oxidative stress-mediated signaling cascade (such as ozone). Involved in the innate immune MAP kinase signaling cascade (MEKK1, MKK4/MKK5 and MPK3/MPK6) downstream of bacterial flagellin receptor FLS2. May be involved in hypersensitive response (HR)-mediated signaling cascade by modulating LIP5 phosphorylation and subsequent multivesicular bodies (MVBs) trafficking. May phosphorylate regulators of WRKY transcription factors. Phosphorylates 1-aminocyclopropane-1-carboxylic acid synthases (ACS2 and ACS6) and may be involved in the regulation of bacterial elicitor flagellin-induced ethylene production. Regulates locally gene-mediated and basal resistance response to certain pathogens. May be involved in the cold and salinity stress-mediated MAP kinase signaling cascade (MEKK1, MKK1/MKK2 and MPK4/MPK6). MKK1-MPK6 module mediates abscisic acid (ABA)-dependent CAT1 expression with H(2)O(2) production and response to drought and salt stress. MKK1-MPK6 module is also involved in sugar signaling during the process of seed germination. MKK3-MPK6 module plays an important role in the jasmonate signal transduction pathway through the negative regulation of MYC2/JIN1 expression. MKK9-MPK3/MPK6 module phosphorylates and activates EIN3, leading to the promotion of EIN3-mediated transcription in ethylene signaling. MPK3/MPK6 cascade regulates camalexin synthesis through transcriptional regulation of the biosynthetic genes after pathogen infection. MKK9-MPK6 module positively regulates leaf senescence. YDA-MKK4/MKK5-MPK3/MPK6 module regulates stomatal cell fate before the guard mother cell (GMC) is specified. When activated, reinforces the feedback loop by phosphorylating BASL, and inhibits stomatal fate by phosphorylating SPCH. This MAPK cascade also functions downstream of the ER receptor in regulating coordinated local cell proliferation, which shapes the morphology of plant organs. The polypeptide is Mitogen-activated protein kinase 6 (Arabidopsis thaliana (Mouse-ear cress)).